A 1449-amino-acid chain; its full sequence is ABC transporter G family member 21 (1449 aa).

Over residues M1–A10 the composition is skewed to basic and acidic residues. The segment at M1–F49 is disordered. Residues G14–N25 show a composition bias toward polar residues. The ABC transporter 1 domain occupies I130–P383. One can recognise an ABC transmembrane type-2 1 domain in the interval W488–L731. The next 5 helical transmembrane spans lie at I519 to L539, I577 to L597, G602 to F622, I634 to I654, and F747 to F767. The 245-residue stretch at F818–V1062 folds into the ABC transporter 2 domain. G854–T861 contributes to the ATP binding site. The ABC transmembrane type-2 2 domain occupies F1152–V1386. Helical transmembrane passes span Y1155–L1175, F1188–I1208, F1228–F1248, F1266–V1286, A1296–I1316, and L1423–I1443.

This sequence belongs to the ABC transporter superfamily. ABCG family. PDR (TC 3.A.1.205) subfamily.

The protein resides in the membrane. This is ABC transporter G family member 21 (abcG21) from Dictyostelium discoideum (Social amoeba).